The primary structure comprises 151 residues: MHALQAKILDPRLGRDFPLPEYATPGSAGLDLRAMLQQDTVLEPGQTLLIPTGLAIHIADPTLAALVLPRSGLGHKHGIVLGNLVGLIDSDYQGELMVSCWNRGQSAFTIAVGERIAQLMLVPVVQARFELVDSFDSSDRGAGGFGHSGSH.

Residues 70–72 (RSG), Asn83, 87–89 (LID), and Met97 each bind substrate.

It belongs to the dUTPase family. The cofactor is Mg(2+).

It catalyses the reaction dUTP + H2O = dUMP + diphosphate + H(+). It functions in the pathway pyrimidine metabolism; dUMP biosynthesis; dUMP from dCTP (dUTP route): step 2/2. This enzyme is involved in nucleotide metabolism: it produces dUMP, the immediate precursor of thymidine nucleotides and it decreases the intracellular concentration of dUTP so that uracil cannot be incorporated into DNA. This Stutzerimonas stutzeri (strain A1501) (Pseudomonas stutzeri) protein is Deoxyuridine 5'-triphosphate nucleotidohydrolase.